Reading from the N-terminus, the 607-residue chain is Terpenoid synthase 29 (607 aa).

5 residues coordinate Mg(2+): aspartate 358, aspartate 362, asparagine 502, threonine 506, and glutamate 510. The short motif at 358 to 362 (DDTYD) is the DDXXD motif element.

This sequence belongs to the terpene synthase family. Tpsa subfamily. Mg(2+) serves as cofactor. Requires Mn(2+) as cofactor. Predominantly expressed in flowers but also in siliques, roots, leaves and stems.

The protein resides in the cytoplasm. The protein operates within secondary metabolite biosynthesis; terpenoid biosynthesis. The polypeptide is Terpenoid synthase 29 (TPS29) (Arabidopsis thaliana (Mouse-ear cress)).